The primary structure comprises 187 residues: Elongation factor P (187 aa).

Belongs to the elongation factor P family.

It localises to the cytoplasm. Its pathway is protein biosynthesis; polypeptide chain elongation. Involved in peptide bond synthesis. Stimulates efficient translation and peptide-bond synthesis on native or reconstituted 70S ribosomes in vitro. Probably functions indirectly by altering the affinity of the ribosome for aminoacyl-tRNA, thus increasing their reactivity as acceptors for peptidyl transferase. The protein is Elongation factor P of Clavibacter michiganensis subsp. michiganensis (strain NCPPB 382).